A 701-amino-acid polypeptide reads, in one-letter code: MEETIRKGSEVEVSSTEEGFADAWFRGILQENPTKSGRKKLRVRYLTLLNDDALSPLIENIEPRFIRPVPPENEYNGIVLEEGTVVDADHKDGWWTGVIIKKLENGKFWVYYDSPPDIIEFERNQLRPHLRWSGWKWLRPDIQELDKSMFSSGTMAEVSTIVDKAEVAWFPAMIIKEIEVDGEKKFIVKDCNKHLSFSGDEARTNSTIDSSRVRPTPPPFPVEKYELMDRVEVFRGSVWRQGLVRGVLDHNCYMVCLVVTKEEPVVKHSDLRPCKVWEDGVWQDGPKQTPVIETPSNVMKTKPMRSCSGAKSMTPKRTTKHARRSLNLEKSAETLTKAESRAATGELRSKRANDVINDNTPLVITPQVKPIASVEPVTPSRVRTATPLKQTKADTQGKSSPKKTLEPMRDENGLENSTRQKVLEEKNSEKKGRKRKRQEEHNSDLKETDESCNGQMAEINDTSSICNDVDDQPLAAWINLPTETSIDHSPIVVNNAAIATDVEERQANDTLMILPFAKKSPFWKMYETQEVCKIAPQSPHFSPLFEAKEELREWTAVGMMVSFYGLLEEVKNLQLDVSPSTLGSLSCSFAELEKHGFDVAAPQSRINKMLSLQDERAKKAEERKGLEKKIEAGEIEGHTYEEEMAELELKILELKRQQVVAKEMKEATDKVTSGMKSYAEMINQEIEDLRLEFQSTASAPW.

2 disordered regions span residues 299–353 and 374–452; these read MKTK…KRAN and VEPV…DESC. Residues 326–340 are compositionally biased toward basic and acidic residues; that stretch reads LNLEKSAETLTKAES. The segment covering 381-399 has biased composition (polar residues); sequence RVRTATPLKQTKADTQGKS. Composition is skewed to basic and acidic residues over residues 403-412, 421-430, and 437-449; these read KTLEPMRDEN, KVLEEKNSEK, and RQEEHNSDLKETD. The 187-residue stretch at 514–700 folds into the DUF724 domain; the sequence is LPFAKKSPFW…LEFQSTASAP (187 aa). The stretch at 626–670 forms a coiled coil; the sequence is LEKKIEAGEIEGHTYEEEMAELELKILELKRQQVVAKEMKEATDK.

In terms of tissue distribution, expressed in roots, stems and flowers.

The protein resides in the nucleus. Functionally, may be involved in the polar growth of plant cells via transportation of RNAs. This chain is DUF724 domain-containing protein 6, found in Arabidopsis thaliana (Mouse-ear cress).